Consider the following 717-residue polypeptide: Segment polarity protein dishevelled homolog DVL-3 (717 aa).

Residues 1-82 enclose the DIX domain; that stretch reads MGETKVIYHL…RVVCWLVSAD (82 aa). Positions 89–235 are disordered; the sequence is GSVCADIQSD…PQIERSSSFS (147 aa). Over residues 118 to 127 the composition is skewed to polar residues; sequence HPNTRGSQEN. Positions 140–155 are enriched in basic and acidic residues; sequence ARRERPGRKETSEHAT. A compositionally biased stretch (low complexity) spans 173–189; sequence ESSSTLMSSELDSTSFF. Residues 199–210 show a composition bias toward polar residues; the sequence is RFSNSTEQSSAS. Over residues 212–224 the composition is skewed to basic residues; that stretch reads LMRRHKRRRRKPK. A PDZ domain is found at 248 to 333; it reads TVTLNMEKYN…KPGPITLTVA (86 aa). The DEP domain occupies 421–495; it reads SESGLEVRDR…SEQCYYIFGD (75 aa). The segment at 552–653 is disordered; the sequence is PDPAYIYGGG…THQSFGPPGI (102 aa). The segment covering 564 to 579 has biased composition (low complexity); it reads GSQHSEGSRSSGSNRS. Composition is skewed to basic and acidic residues over residues 580–593 and 602–618; these read STEKRKDRETKGGD and ESDHTTRSSLRRDRAAS. Residues 629 to 645 are compositionally biased toward basic residues; it reads HRSHHSIAHSIRSHHTH.

This sequence belongs to the DSH family. In terms of tissue distribution, expressed throughout the epidermis.

The protein resides in the cytoplasm. Involved in the signal transduction pathway mediated by multiple Wnt genes. Required during ciliogenesis for the docking of basal bodies to the apical plasma membrane. In Xenopus laevis (African clawed frog), this protein is Segment polarity protein dishevelled homolog DVL-3.